The chain runs to 213 residues: Endonuclease III (213 aa).

A HhH domain is found at 108 to 127 (FKELIKLPGVGRKTANVVLN). Residues Cys-187, Cys-194, Cys-197, and Cys-203 each coordinate [4Fe-4S] cluster.

The protein belongs to the Nth/MutY family. [4Fe-4S] cluster serves as cofactor.

The enzyme catalyses 2'-deoxyribonucleotide-(2'-deoxyribose 5'-phosphate)-2'-deoxyribonucleotide-DNA = a 3'-end 2'-deoxyribonucleotide-(2,3-dehydro-2,3-deoxyribose 5'-phosphate)-DNA + a 5'-end 5'-phospho-2'-deoxyribonucleoside-DNA + H(+). Its function is as follows. DNA repair enzyme that has both DNA N-glycosylase activity and AP-lyase activity. The DNA N-glycosylase activity releases various damaged pyrimidines from DNA by cleaving the N-glycosidic bond, leaving an AP (apurinic/apyrimidinic) site. The AP-lyase activity cleaves the phosphodiester bond 3' to the AP site by a beta-elimination, leaving a 3'-terminal unsaturated sugar and a product with a terminal 5'-phosphate. This chain is Endonuclease III, found in Rickettsia felis (strain ATCC VR-1525 / URRWXCal2) (Rickettsia azadi).